A 269-amino-acid chain; its full sequence is Formamidopyrimidine-DNA glycosylase (269 aa).

The Schiff-base intermediate with DNA role is filled by Pro-2. Glu-3 functions as the Proton donor in the catalytic mechanism. Catalysis depends on Lys-57, which acts as the Proton donor; for beta-elimination activity. Positions 90, 109, and 150 each coordinate DNA. The FPG-type zinc-finger motif lies at 235 to 269; sequence QVYGRKGEPCRVCGTPIVATKHAQRATFYCRHCQK. Arg-259 acts as the Proton donor; for delta-elimination activity in catalysis.

Belongs to the FPG family. In terms of assembly, monomer. Zn(2+) serves as cofactor.

The enzyme catalyses Hydrolysis of DNA containing ring-opened 7-methylguanine residues, releasing 2,6-diamino-4-hydroxy-5-(N-methyl)formamidopyrimidine.. The catalysed reaction is 2'-deoxyribonucleotide-(2'-deoxyribose 5'-phosphate)-2'-deoxyribonucleotide-DNA = a 3'-end 2'-deoxyribonucleotide-(2,3-dehydro-2,3-deoxyribose 5'-phosphate)-DNA + a 5'-end 5'-phospho-2'-deoxyribonucleoside-DNA + H(+). Its function is as follows. Involved in base excision repair of DNA damaged by oxidation or by mutagenic agents. Acts as a DNA glycosylase that recognizes and removes damaged bases. Has a preference for oxidized purines, such as 7,8-dihydro-8-oxoguanine (8-oxoG). Has AP (apurinic/apyrimidinic) lyase activity and introduces nicks in the DNA strand. Cleaves the DNA backbone by beta-delta elimination to generate a single-strand break at the site of the removed base with both 3'- and 5'-phosphates. This chain is Formamidopyrimidine-DNA glycosylase, found in Salmonella enteritidis PT4 (strain P125109).